Here is a 50-residue protein sequence, read N- to C-terminus: Tubulin alpha chain (50 aa).

N28 is a binding site for GTP. E40 is a catalytic residue.

The protein belongs to the tubulin family. In terms of assembly, dimer of alpha and beta chains. A typical microtubule is a hollow water-filled tube with an outer diameter of 25 nm and an inner diameter of 15 nM. Alpha-beta heterodimers associate head-to-tail to form protofilaments running lengthwise along the microtubule wall with the beta-tubulin subunit facing the microtubule plus end conferring a structural polarity. Microtubules usually have 13 protofilaments but different protofilament numbers can be found in some organisms and specialized cells. The cofactor is Mg(2+).

The protein localises to the cytoplasm. Its subcellular location is the cytoskeleton. It carries out the reaction GTP + H2O = GDP + phosphate + H(+). In terms of biological role, tubulin is the major constituent of microtubules, a cylinder consisting of laterally associated linear protofilaments composed of alpha- and beta-tubulin heterodimers. Microtubules grow by the addition of GTP-tubulin dimers to the microtubule end, where a stabilizing cap forms. Below the cap, tubulin dimers are in GDP-bound state, owing to GTPase activity of alpha-tubulin. The polypeptide is Tubulin alpha chain (Populus euphratica (Euphrates poplar)).